The following is a 309-amino-acid chain: MTDRVIRIGTRGSMLALKQSGNVKAAMEALWPGLRVELQVVRTTGDKILDVPLAKVGGKGLFVKEIEDALLARTVDLAVHSMKDVPAILPEGLEIGAIPKREDPRDVIVTRTGKGIADLPMGGRVGTSSLRRASQIRKLRPDIEIANLRGNIETRLRKLTEGAFDAIILAAAGLHRMGWQNRVTSYLDPADFLPAIGQGAIGIELRCDDGEVRELLAPLHDPDTHVAVEAERSLLRTLEGGCQVPIGGHAHLVDGTLTLSGMVASIDGEELFRASRAGSPAQARKIGRDVGMELLDSGARRILEEIYRA.

Cys-242 bears the S-(dipyrrolylmethanemethyl)cysteine mark.

It belongs to the HMBS family. As to quaternary structure, monomer. The cofactor is dipyrromethane.

The enzyme catalyses 4 porphobilinogen + H2O = hydroxymethylbilane + 4 NH4(+). Its pathway is porphyrin-containing compound metabolism; protoporphyrin-IX biosynthesis; coproporphyrinogen-III from 5-aminolevulinate: step 2/4. Its function is as follows. Tetrapolymerization of the monopyrrole PBG into the hydroxymethylbilane pre-uroporphyrinogen in several discrete steps. This chain is Porphobilinogen deaminase, found in Syntrophobacter fumaroxidans (strain DSM 10017 / MPOB).